A 201-amino-acid chain; its full sequence is Protein tirC (201 aa).

The 135-residue stretch at 52 to 186 (ERIKVFIVHG…YVWINYTEDL (135 aa)) folds into the TIR domain.

This chain is Protein tirC (tirC), found in Dictyostelium discoideum (Social amoeba).